Here is a 208-residue protein sequence, read N- to C-terminus: Small ribosomal subunit protein uS4 (208 aa).

The segment at 31-51 (SALDKRAYGPGQHGQRRAKTS) is disordered. One can recognise an S4 RNA-binding domain in the interval 98 to 160 (RRLDNVVYRM…TKSNSQVVRA (63 aa)).

The protein belongs to the universal ribosomal protein uS4 family. As to quaternary structure, part of the 30S ribosomal subunit. Contacts protein S5. The interaction surface between S4 and S5 is involved in control of translational fidelity.

Its function is as follows. One of the primary rRNA binding proteins, it binds directly to 16S rRNA where it nucleates assembly of the body of the 30S subunit. With S5 and S12 plays an important role in translational accuracy. In Helicobacter pylori (strain ATCC 700392 / 26695) (Campylobacter pylori), this protein is Small ribosomal subunit protein uS4.